The sequence spans 546 residues: Chaperonin GroEL 6 (546 aa).

Residues 30–33 (TLGP), K51, 87–91 (DGTTT), G415, and D496 each bind ATP.

It belongs to the chaperonin (HSP60) family. Forms a cylinder of 14 subunits composed of two heptameric rings stacked back-to-back. Interacts with the co-chaperonin GroES.

It is found in the cytoplasm. It carries out the reaction ATP + H2O + a folded polypeptide = ADP + phosphate + an unfolded polypeptide.. Its function is as follows. Together with its co-chaperonin GroES, plays an essential role in assisting protein folding. The GroEL-GroES system forms a nano-cage that allows encapsulation of the non-native substrate proteins and provides a physical environment optimized to promote and accelerate protein folding. In Bradyrhizobium diazoefficiens (strain JCM 10833 / BCRC 13528 / IAM 13628 / NBRC 14792 / USDA 110), this protein is Chaperonin GroEL 6.